The chain runs to 424 residues: Arginine ADP-riboxanase OspC4 (424 aa).

The NAD(+) site is built by His-85, Gln-86, Ser-87, Leu-91, Ile-104, Asn-114, Phe-130, His-148, Phe-153, Asp-173, and Glu-268. Glu-268 is an active-site residue. 3 ANK repeats span residues 311-340, 355-386, and 393-422; these read MAHQ…FTKQ, NLYD…DVNK, and SGDT…GIRQ.

This sequence belongs to the OspC family.

It localises to the secreted. The protein resides in the host cytoplasm. The enzyme catalyses L-arginyl-[protein] + NAD(+) = ADP-riboxanated L-argininyl-[protein] + nicotinamide + NH4(+) + H(+). ADP-riboxanase effector that mediates arginine ADP-riboxanation of host caspase CASP4/CASP11, thereby inhibiting pyroptosis. This Shigella flexneri protein is Arginine ADP-riboxanase OspC4.